We begin with the raw amino-acid sequence, 72 residues long: uncharacterized protein (72 aa).

It belongs to the phage portal family. HK97 subfamily.

This is an uncharacterized protein from Rickettsia conorii (strain ATCC VR-613 / Malish 7).